The chain runs to 202 residues: uncharacterized protein (202 aa).

An START domain is found at 1–202; sequence MRGILRMTVL…KGLRSAAEKR (202 aa).

Its function is as follows. May play a role in the interaction of the bacterium with animal cells. This is an uncharacterized protein from Pseudomonas aeruginosa (strain ATCC 15692 / DSM 22644 / CIP 104116 / JCM 14847 / LMG 12228 / 1C / PRS 101 / PAO1).